We begin with the raw amino-acid sequence, 415 residues long: Multidrug resistance protein MdtA (415 aa).

Residues 1–21 (MKSTVKKRGWVIAGIVVVALA) form the signal peptide. Positions 387–415 (AQTAADAAKPERGERAPTDSARAAKGARS) are disordered. A compositionally biased stretch (basic and acidic residues) spans 394–403 (AKPERGERAP).

It belongs to the membrane fusion protein (MFP) (TC 8.A.1) family. In terms of assembly, part of a tripartite efflux system composed of MdtA, MdtB and MdtC.

Its subcellular location is the cell inner membrane. The sequence is that of Multidrug resistance protein MdtA from Cronobacter turicensis (strain DSM 18703 / CCUG 55852 / LMG 23827 / z3032).